The chain runs to 240 residues: tRNA (guanine-N(1)-)-methyltransferase (240 aa).

Residues glycine 110 and valine 130–leucine 135 each bind S-adenosyl-L-methionine.

This sequence belongs to the RNA methyltransferase TrmD family. Homodimer.

The protein localises to the cytoplasm. The enzyme catalyses guanosine(37) in tRNA + S-adenosyl-L-methionine = N(1)-methylguanosine(37) in tRNA + S-adenosyl-L-homocysteine + H(+). In terms of biological role, specifically methylates guanosine-37 in various tRNAs. This chain is tRNA (guanine-N(1)-)-methyltransferase, found in Borrelia recurrentis (strain A1).